Reading from the N-terminus, the 162-residue chain is NADH-quinone oxidoreductase subunit I (162 aa).

2 consecutive 4Fe-4S ferredoxin-type domains span residues 54-83 and 93-122; these read RRYE…INST and SSYE…ETNI. Cysteine 63, cysteine 66, cysteine 69, cysteine 73, cysteine 102, cysteine 105, cysteine 108, and cysteine 112 together coordinate [4Fe-4S] cluster.

This sequence belongs to the complex I 23 kDa subunit family. NDH-1 is composed of 14 different subunits. Subunits NuoA, H, J, K, L, M, N constitute the membrane sector of the complex. [4Fe-4S] cluster serves as cofactor.

The protein localises to the cell inner membrane. It carries out the reaction a quinone + NADH + 5 H(+)(in) = a quinol + NAD(+) + 4 H(+)(out). Its function is as follows. NDH-1 shuttles electrons from NADH, via FMN and iron-sulfur (Fe-S) centers, to quinones in the respiratory chain. The immediate electron acceptor for the enzyme in this species is believed to be ubiquinone. Couples the redox reaction to proton translocation (for every two electrons transferred, four hydrogen ions are translocated across the cytoplasmic membrane), and thus conserves the redox energy in a proton gradient. This chain is NADH-quinone oxidoreductase subunit I, found in Francisella tularensis subsp. tularensis (strain FSC 198).